Reading from the N-terminus, the 98-residue chain is NADH-ubiquinone oxidoreductase chain 4L (98 aa).

3 helical membrane-spanning segments follow: residues 1–21, 29–49, and 59–79; these read MSLV…GLLM, ALLC…ITIL, and TPII…ALLV.

The protein belongs to the complex I subunit 4L family. In terms of assembly, core subunit of respiratory chain NADH dehydrogenase (Complex I) which is composed of 45 different subunits.

It localises to the mitochondrion inner membrane. The enzyme catalyses a ubiquinone + NADH + 5 H(+)(in) = a ubiquinol + NAD(+) + 4 H(+)(out). Core subunit of the mitochondrial membrane respiratory chain NADH dehydrogenase (Complex I) which catalyzes electron transfer from NADH through the respiratory chain, using ubiquinone as an electron acceptor. Part of the enzyme membrane arm which is embedded in the lipid bilayer and involved in proton translocation. This is NADH-ubiquinone oxidoreductase chain 4L (MT-ND4L) from Lipotes vexillifer (Yangtze river dolphin).